We begin with the raw amino-acid sequence, 143 residues long: Transcriptional regulator MraZ (143 aa).

SpoVT-AbrB domains follow at residues glutamate 5–glutamate 47 and alanine 76–alanine 119.

It belongs to the MraZ family. Forms oligomers.

It is found in the cytoplasm. The protein resides in the nucleoid. In Oceanobacillus iheyensis (strain DSM 14371 / CIP 107618 / JCM 11309 / KCTC 3954 / HTE831), this protein is Transcriptional regulator MraZ.